Consider the following 1388-residue polypeptide: Dicer-like protein 2 (1388 aa).

Residues methionine 23–alanine 203 enclose the Helicase ATP-binding domain. ATP is bound at residue methionine 36–threonine 43. A DEAH box motif is present at residues aspartate 144–histidine 147. Positions lysine 368–serine 537 constitute a Helicase C-terminal domain. One can recognise a Dicer dsRNA-binding fold domain in the interval alanine 564–lysine 658. 2 consecutive RNase III domains span residues isoleucine 906–glycine 1059 and asparagine 1098–glycine 1281. Mg(2+) contacts are provided by glutamate 1137, aspartate 1267, and glutamate 1270.

This sequence belongs to the helicase family. Dicer subfamily. Mg(2+) serves as cofactor. The cofactor is Mn(2+).

Dicer-like endonuclease involved in cleaving double-stranded RNA in the RNA interference (RNAi) pathway. Produces 21 to 25 bp dsRNAs (siRNAs) which target the selective destruction of homologous RNAs leading to sequence-specific suppression of gene expression, called post-transcriptional gene silencing (PTGS). Part of a broad host defense response against viral infection and transposons. This is Dicer-like protein 2 (dcl2) from Aspergillus fumigatus (strain ATCC MYA-4609 / CBS 101355 / FGSC A1100 / Af293) (Neosartorya fumigata).